A 1489-amino-acid polypeptide reads, in one-letter code: ABC transporter FUM19 (1489 aa).

10 helical membrane-spanning segments follow: residues 33–53 (IIFF…RIFV), 84–104 (CFSS…ALSY), 116–136 (LLSI…RTLW), 143–163 (LEYG…FAVW), 264–284 (LLLP…QAFL), 302–322 (WGLI…TSLY), 373–393 (FLNL…AWFL), 397–417 (VGIA…GVSI), 482–502 (IASL…MLAA), and 511–531 (HKVY…GSIF). An ABC transmembrane type-1 1 domain is found at 272 to 539 (IALIGLSLAQ…IFRSVSPLMS (268 aa)). The region spanning 591 to 823 (VKVIQASFGW…YQSHLQSLCI (233 aa)) is the ABC transporter 1 domain. Asparagine 612 and asparagine 616 each carry an N-linked (GlcNAc...) asparagine glycan. 625-632 (GPVGSGKS) serves as a coordination point for ATP. Asparagine 670 carries an N-linked (GlcNAc...) asparagine glycan. Positions 852-862 (EQTRSSRRGAD) are enriched in basic and acidic residues. Residues 852 to 874 (EQTRSSRRGADNQETIASGADSS) form a disordered region. Positions 863 to 874 (NQETIASGADSS) are enriched in polar residues. The next 6 helical transmembrane spans lie at 890–910 (AVPP…GFLY), 945–965 (ILAL…FALI), 977–999 (AITR…NYFS), 1031–1051 (AASS…LYFV), 1120–1140 (WLLF…VALV), and 1149–1169 (GFAG…TNVV). An ABC transmembrane type-1 2 domain is found at 902–1187 (SSLSYGFLYS…SMGAVSRLKA (286 aa)). The 272-residue stretch at 1214–1485 (IKIDGVSASY…KEGKFRALWE (272 aa)) folds into the ABC transporter 2 domain. An ATP-binding site is contributed by 1254 to 1261 (GRTGSGKS).

The protein belongs to the ABC transporter superfamily. ABCC family. Conjugate transporter (TC 3.A.1.208) subfamily.

The protein localises to the cell membrane. Functionally, ABC transporter that may provide the dual role of fumonisin export and self-protection by allowing the fungus to evade the harmful effect of its own fumonisin production. Plays a role in the repression of the gene cluster that mediates fumonisin biosynthesis. The polypeptide is ABC transporter FUM19 (Gibberella moniliformis (strain M3125 / FGSC 7600) (Maize ear and stalk rot fungus)).